Here is a 152-residue protein sequence, read N- to C-terminus: 6,7-dimethyl-8-ribityllumazine synthase (152 aa).

5-amino-6-(D-ribitylamino)uracil contacts are provided by residues phenylalanine 22, 56 to 58 (AFE), and 79 to 81 (AVI). 84–85 (AT) is a (2S)-2-hydroxy-3-oxobutyl phosphate binding site. Residue histidine 87 is the Proton donor of the active site. 5-amino-6-(D-ribitylamino)uracil is bound at residue phenylalanine 112. (2S)-2-hydroxy-3-oxobutyl phosphate is bound at residue arginine 126.

Belongs to the DMRL synthase family.

The enzyme catalyses (2S)-2-hydroxy-3-oxobutyl phosphate + 5-amino-6-(D-ribitylamino)uracil = 6,7-dimethyl-8-(1-D-ribityl)lumazine + phosphate + 2 H2O + H(+). It participates in cofactor biosynthesis; riboflavin biosynthesis; riboflavin from 2-hydroxy-3-oxobutyl phosphate and 5-amino-6-(D-ribitylamino)uracil: step 1/2. Functionally, catalyzes the formation of 6,7-dimethyl-8-ribityllumazine by condensation of 5-amino-6-(D-ribitylamino)uracil with 3,4-dihydroxy-2-butanone 4-phosphate. This is the penultimate step in the biosynthesis of riboflavin. The chain is 6,7-dimethyl-8-ribityllumazine synthase from Carboxydothermus hydrogenoformans (strain ATCC BAA-161 / DSM 6008 / Z-2901).